Reading from the N-terminus, the 91-residue chain is Large ribosomal subunit protein eL43 (91 aa).

A C4-type zinc finger spans residues 38–59 (CNFCGKDSLKRKAAGIWECKAC).

Belongs to the eukaryotic ribosomal protein eL43 family.

The protein is Large ribosomal subunit protein eL43 of Schistosoma mansoni (Blood fluke).